A 194-amino-acid polypeptide reads, in one-letter code: Dof zinc finger protein DOF4.2 (194 aa).

A Dof-type zinc finger spans residues 21–75 (RVCPRCYSDQTRFSYFNNNKKSQPRYKCKNCCRCWTHGGVLRNIPVTGICDKSNL). Residues C23, C26, C48, and C51 each contribute to the Zn(2+) site.

It localises to the nucleus. Transcription factor that binds specifically to a 5'-AA[AG]G-3' consensus core sequence. The protein is Dof zinc finger protein DOF4.2 (DOF4.2) of Arabidopsis thaliana (Mouse-ear cress).